A 386-amino-acid polypeptide reads, in one-letter code: Zinc finger CCCH domain-containing protein 2 (386 aa).

2 consecutive C3H1-type zinc fingers follow at residues 116-143 (HYSGTACPDFRKGGCKRGDACEYAHGVF) and 151-175 (RYRTQPCKDGTACRRRVCFFAHTPD). 2 disordered regions span residues 180 to 200 (LPAQQSSPRSVASSPLAESYD) and 220 to 252 (SSPTSTLMSPPKSPPSESPPLSPDGAAAIRRGS). The segment covering 182-192 (AQQSSPRSVAS) has biased composition (polar residues). Over residues 220–229 (SSPTSTLMSP) the composition is skewed to low complexity. The segment covering 230–241 (PKSPPSESPPLS) has biased composition (pro residues).

Its subcellular location is the nucleus. Its function is as follows. Involved in leaf senescence delay. May repress jasmonic acid (JA) signaling role in promoting leaf senescence. May regulate panicle development and pollination/fertilization process. The sequence is that of Zinc finger CCCH domain-containing protein 2 from Oryza sativa subsp. japonica (Rice).